The sequence spans 176 residues: R-phycoerythrin beta chain (176 aa).

Residues cysteine 50 and cysteine 61 each contribute to the phycourobilin site. Asparagine 72 carries the post-translational modification N4-methylasparagine. 2 residues coordinate (2R,3E)-phycoerythrobilin: cysteine 82 and cysteine 158.

This sequence belongs to the phycobiliprotein family. As to quaternary structure, heterodimer of an alpha and a beta chain. In terms of processing, contains two covalently linked phycoerythrobilin chromophores and one covalently linked phycourobilin chromophore.

It is found in the plastid. It localises to the chloroplast thylakoid membrane. In terms of biological role, light-harvesting photosynthetic bile pigment-protein from the phycobiliprotein complex. This is R-phycoerythrin beta chain (cpeB) from Aglaothamnion neglectum (Red alga).